We begin with the raw amino-acid sequence, 238 residues long: Putative csd-like protein HI_1343 (238 aa).

Position 146 is an N6-(pyridoxal phosphate)lysine (K146).

The protein belongs to the class-V pyridoxal-phosphate-dependent aminotransferase family. Csd subfamily.

The polypeptide is Putative csd-like protein HI_1343 (Haemophilus influenzae (strain ATCC 51907 / DSM 11121 / KW20 / Rd)).